Here is a 169-residue protein sequence, read N- to C-terminus: Peptide deformylase (169 aa).

Fe cation-binding residues include C92 and H134. E135 is an active-site residue. H138 is a Fe cation binding site.

It belongs to the polypeptide deformylase family. The cofactor is Fe(2+).

It carries out the reaction N-terminal N-formyl-L-methionyl-[peptide] + H2O = N-terminal L-methionyl-[peptide] + formate. Removes the formyl group from the N-terminal Met of newly synthesized proteins. Requires at least a dipeptide for an efficient rate of reaction. N-terminal L-methionine is a prerequisite for activity but the enzyme has broad specificity at other positions. The polypeptide is Peptide deformylase (Cellvibrio japonicus (strain Ueda107) (Pseudomonas fluorescens subsp. cellulosa)).